A 511-amino-acid chain; its full sequence is Limonoid UDP-glucosyltransferase (511 aa).

Catalysis depends on histidine 19, which acts as the Proton acceptor. Residue histidine 19 coordinates an anthocyanidin. Residues glutamine 344, histidine 359, tryptophan 362, asparagine 363, serine 364, and glutamate 367 each coordinate UDP-alpha-D-glucose. Glycine 382 provides a ligand contact to an anthocyanidin. Positions 383 and 384 each coordinate UDP-alpha-D-glucose.

Belongs to the UDP-glycosyltransferase family.

It carries out the reaction limonin + UDP-alpha-D-glucose + H2O = limonin 17-beta-D-glucoside + UDP + 2 H(+). Its function is as follows. Involved in the glucosylation of limonoids. The chain is Limonoid UDP-glucosyltransferase from Citrus unshiu (Satsuma mandarin).